The sequence spans 406 residues: MQTAATSTFFANPHVKHLPGPFLRPSPHYGALVHLPSFRNKTPISIAMAASPSPPPLQELTITRPDDWHLHLREGDVLAAVLPHSAMHFGRAIVMPNLKPPVTTTARALEYREEILRALPPGSNFVPLMTLYLTDNTSPEEIKLAKKSGVVFAVKLYPSGATTNSQDGVTDIFGKCLPVLEEMARQEMPLLVHGEVTDQHVDTFDREKVFIEKILAPLVQRLPQLKIVMEHITTMDAVNFVESCKEGHVAATVTPQHLLLNRNALFQGGLQPHNYCLPVLKRETHRQAIVSAVTSGSKQYFLGTDSAPHDKRRKECSCGCAGIYSAPVALSLYAKVFEQAGALDKLEAFTSFNGPDFYGLPRNTSKIVLRKSAWKVPDTYSYSSGEIVPMFTGNTLEWLPSDQLEE.

A mitochondrion-targeting transit peptide spans 1 to 41 (MQTAATSTFFANPHVKHLPGPFLRPSPHYGALVHLPSFRNK). His-69, His-71, Lys-155, His-193, His-231, and Asp-305 together coordinate Zn(2+). Lys-155 is modified (N6-carboxylysine).

This sequence belongs to the metallo-dependent hydrolases superfamily. DHOase family. Class II DHOase subfamily. Zn(2+) is required as a cofactor.

The protein resides in the mitochondrion. The catalysed reaction is (S)-dihydroorotate + H2O = N-carbamoyl-L-aspartate + H(+). Its pathway is pyrimidine metabolism; UMP biosynthesis via de novo pathway; (S)-dihydroorotate from bicarbonate: step 3/3. The sequence is that of Dihydroorotase, mitochondrial (PYRC) from Oryza sativa subsp. japonica (Rice).